We begin with the raw amino-acid sequence, 281 residues long: NADPH-dependent 7-cyano-7-deazaguanine reductase (281 aa).

Residue 88 to 90 (IES) coordinates substrate. Position 90 to 91 (90 to 91 (SK)) interacts with NADPH. Cys189 serves as the catalytic Thioimide intermediate. Asp196 serves as the catalytic Proton donor. 228–229 (HE) contacts substrate. NADPH is bound at residue 257 to 258 (RG).

This sequence belongs to the GTP cyclohydrolase I family. QueF type 2 subfamily. As to quaternary structure, homodimer.

Its subcellular location is the cytoplasm. It carries out the reaction 7-aminomethyl-7-carbaguanine + 2 NADP(+) = 7-cyano-7-deazaguanine + 2 NADPH + 3 H(+). It participates in tRNA modification; tRNA-queuosine biosynthesis. Catalyzes the NADPH-dependent reduction of 7-cyano-7-deazaguanine (preQ0) to 7-aminomethyl-7-deazaguanine (preQ1). This Yersinia pseudotuberculosis serotype O:1b (strain IP 31758) protein is NADPH-dependent 7-cyano-7-deazaguanine reductase.